A 30-amino-acid chain; its full sequence is Cyclotide cycloviolacin O17 (30 aa).

The cyclopeptide (Gly-Asn) cross-link spans Gly-1–Asn-30. 3 disulfide bridges follow: Cys-4–Cys-20, Cys-8–Cys-22, and Cys-13–Cys-27.

In terms of processing, this is a cyclic peptide.

Probably participates in a plant defense mechanism. This chain is Cyclotide cycloviolacin O17, found in Psychotria brachyceras.